Reading from the N-terminus, the 689-residue chain is Potassium-transporting ATPase ATP-binding subunit (689 aa).

The next 4 helical transmembrane spans lie at 35–55 (VMFV…AILA), 62–82 (AAFT…ANFA), 220–240 (ALTI…ATLF), and 260–280 (VLVA…LSAI). Asp313 acts as the 4-aspartylphosphate intermediate in catalysis. Residues Asp350, Glu354, 383-390 (FSAQTRMS), and Lys401 contribute to the ATP site. Mg(2+)-binding residues include Asp524 and Asp528. 3 helical membrane-spanning segments follow: residues 594-614 (FAII…LNVM), 622-642 (AIMS…PLAL), and 665-685 (VGGL…LVAL).

Belongs to the cation transport ATPase (P-type) (TC 3.A.3) family. Type IA subfamily. As to quaternary structure, the system is composed of three essential subunits: KdpA, KdpB and KdpC.

It is found in the cell inner membrane. The enzyme catalyses K(+)(out) + ATP + H2O = K(+)(in) + ADP + phosphate + H(+). In terms of biological role, part of the high-affinity ATP-driven potassium transport (or Kdp) system, which catalyzes the hydrolysis of ATP coupled with the electrogenic transport of potassium into the cytoplasm. This subunit is responsible for energy coupling to the transport system and for the release of the potassium ions to the cytoplasm. The protein is Potassium-transporting ATPase ATP-binding subunit of Serratia proteamaculans (strain 568).